A 207-amino-acid chain; its full sequence is Serotonin N-acetyltransferase (207 aa).

The disordered stretch occupies residues 1–28 (MSTQSTHPLKPEAPRLPPGIPESPSCQR). Thr-31 is subject to Phosphothreonine; by PKA. An N-acetyltransferase domain is found at 35–194 (SEFRCLTPED…SLTFMELHCS (160 aa)). Residue Leu-124 participates in substrate binding. Residues 124-126 (LAV) and 132-137 (QQGRGP) each bind acetyl-CoA. Met-159 lines the substrate pocket. Residue 168-170 (YER) coordinates acetyl-CoA. Residue Ser-205 is modified to Phosphoserine.

This sequence belongs to the acetyltransferase family. AANAT subfamily. Monomer. Interacts with several 14-3-3 proteins, including YWHAB, YWHAE, YWHAG and YWHAZ, preferentially when phosphorylated at Thr-31. Phosphorylation on Ser-205 also allows binding to YWHAZ, but with lower affinity. The interaction with YWHAZ considerably increases affinity for arylalkylamines and acetyl-CoA and protects the enzyme from dephosphorylation and proteasomal degradation. It may also prevent thiol-dependent inactivation. CAMP-dependent phosphorylation on both N-terminal Thr-31 and C-terminal Ser-205 regulates AANAT activity by promoting interaction with 14-3-3 proteins. Highly expressed in pineal gland and at lower levels in the retina. Weak expression in several brain regions and in the pituitary gland.

It localises to the cytoplasm. It carries out the reaction a 2-arylethylamine + acetyl-CoA = an N-acetyl-2-arylethylamine + CoA + H(+). It functions in the pathway aromatic compound metabolism; melatonin biosynthesis; melatonin from serotonin: step 1/2. Controls the night/day rhythm of melatonin production in the pineal gland. Catalyzes the N-acetylation of serotonin into N-acetylserotonin, the penultimate step in the synthesis of melatonin. This is Serotonin N-acetyltransferase (AANAT) from Homo sapiens (Human).